We begin with the raw amino-acid sequence, 493 residues long: Glutamate--tRNA ligase (493 aa).

The short motif at 10–20 (PSPTGDPHVGT) is the 'HIGH' region element. Positions 251–255 (KLSKR) match the 'KMSKS' region motif. Position 254 (lysine 254) interacts with ATP.

Belongs to the class-I aminoacyl-tRNA synthetase family. Glutamate--tRNA ligase type 1 subfamily. Monomer.

The protein localises to the cytoplasm. The catalysed reaction is tRNA(Glu) + L-glutamate + ATP = L-glutamyl-tRNA(Glu) + AMP + diphosphate. Functionally, catalyzes the attachment of glutamate to tRNA(Glu) in a two-step reaction: glutamate is first activated by ATP to form Glu-AMP and then transferred to the acceptor end of tRNA(Glu). The chain is Glutamate--tRNA ligase from Marinomonas sp. (strain MWYL1).